Reading from the N-terminus, the 257-residue chain is Phosphonates import ATP-binding protein PhnC (257 aa).

Residues 4-248 enclose the ABC transporter domain; that stretch reads IEFKNVSKVY…IFSEIYGRTI (245 aa). 37 to 44 is an ATP binding site; that stretch reads GLSGAGKS.

This sequence belongs to the ABC transporter superfamily. Phosphonates importer (TC 3.A.1.9.1) family. In terms of assembly, the complex is composed of two ATP-binding proteins (PhnC), two transmembrane proteins (PhnE) and a solute-binding protein (PhnD).

The protein localises to the cell membrane. It catalyses the reaction phosphonate(out) + ATP + H2O = phosphonate(in) + ADP + phosphate + H(+). In terms of biological role, part of the ABC transporter complex PhnCDE involved in phosphonates import. Responsible for energy coupling to the transport system. This is Phosphonates import ATP-binding protein PhnC from Staphylococcus aureus (strain bovine RF122 / ET3-1).